Consider the following 459-residue polypeptide: Protein phosphatase 1M (459 aa).

Positions Met1–Phe10 are enriched in basic residues. Positions Met1–Gly64 are disordered. The span at Glu14–Ser27 shows a compositional bias: pro residues. Residues Arg38–Asp48 are compositionally biased toward low complexity. Positions 125 and 126 each coordinate Mn(2+). One can recognise a PPM-type phosphatase domain in the interval Met162–His459.

Belongs to the PP2C family. Mg(2+) serves as cofactor. It depends on Mn(2+) as a cofactor.

The protein resides in the nucleus. It carries out the reaction O-phospho-L-seryl-[protein] + H2O = L-seryl-[protein] + phosphate. The catalysed reaction is O-phospho-L-threonyl-[protein] + H2O = L-threonyl-[protein] + phosphate. This chain is Protein phosphatase 1M (PPM1M), found in Homo sapiens (Human).